The following is a 342-amino-acid chain: Phosphoribosylformylglycinamidine cyclo-ligase (342 aa).

This sequence belongs to the AIR synthase family.

Its subcellular location is the cytoplasm. The enzyme catalyses 2-formamido-N(1)-(5-O-phospho-beta-D-ribosyl)acetamidine + ATP = 5-amino-1-(5-phospho-beta-D-ribosyl)imidazole + ADP + phosphate + H(+). It functions in the pathway purine metabolism; IMP biosynthesis via de novo pathway; 5-amino-1-(5-phospho-D-ribosyl)imidazole from N(2)-formyl-N(1)-(5-phospho-D-ribosyl)glycinamide: step 2/2. In Staphylococcus aureus (strain MRSA252), this protein is Phosphoribosylformylglycinamidine cyclo-ligase.